We begin with the raw amino-acid sequence, 241 residues long: B9 domain-containing protein 1 (241 aa).

Residues 1–42 form a disordered region; the sequence is MSASEGISLPGNEETTPPHEKHKQKAKKAKKKSRSAKESVPN. The segment covering 20 to 34 has biased composition (basic residues); the sequence is EKHKQKAKKAKKKSR. The 145-residue stretch at 53 to 197 folds into the C2 B9-type domain; sequence FSLSIVGQIV…TSWLLRREPE (145 aa).

Belongs to the B9D family. In terms of assembly, probable component of the tectonic-like complex (also named MKS complex), composed of B9d1, B9d2, Cc2d2a, Mks1 and tctn. In terms of tissue distribution, expressed in type I sensory neurons (at protein level). Expressed in spermatids and spermatocytes (at protein level).

The protein resides in the cytoplasm. Its subcellular location is the cytoskeleton. It is found in the cilium basal body. Its function is as follows. Probable component of the tectonic-like complex (also named MKS complex), a complex localized at the transition zone of primary cilia. Required for ciliary structure and function. This chain is B9 domain-containing protein 1, found in Drosophila melanogaster (Fruit fly).